The following is a 429-amino-acid chain: tRNA (guanine(9)-N1)-methyltransferase (429 aa).

The SAM-dependent MTase TRM10-type domain maps to 131 to 379 (KERKEAQRRI…AVIPIRKYAP (249 aa)). S-adenosyl-L-methionine-binding positions include 285 to 286 (LS), Gly305, 309 to 313 (DRNRH), Cys317, Leu331, and 344 to 346 (KAL). Asp309 acts as the Proton acceptor in catalysis. The segment at 383–429 (AKRAKTETKRNEKVEEEVECTSAEGEEDIGVIEESAEVDPEDVFSNQ) is disordered. Basic and acidic residues predominate over residues 386–395 (AKTETKRNEK). Residues 396–429 (VEEEVECTSAEGEEDIGVIEESAEVDPEDVFSNQ) are compositionally biased toward acidic residues.

Belongs to the class IV-like SAM-binding methyltransferase superfamily. TRM10 family. In terms of assembly, monomer.

The protein localises to the cytoplasm. Its subcellular location is the nucleus. It carries out the reaction guanosine(9) in tRNA + S-adenosyl-L-methionine = N(1)-methylguanosine(9) in tRNA + S-adenosyl-L-homocysteine + H(+). S-adenosyl-L-methionine-dependent guanine N(1)-methyltransferase that catalyzes the formation of N(1)-methylguanine at position 9 (m1G9) in cytoplasmic tRNA. This chain is tRNA (guanine(9)-N1)-methyltransferase, found in Cryptococcus neoformans var. neoformans serotype D (strain B-3501A) (Filobasidiella neoformans).